The sequence spans 500 residues: Glutamate decarboxylase 3 (500 aa).

Ser-8 is subject to Phosphoserine. Lys-277 carries the N6-(pyridoxal phosphate)lysine modification.

The protein belongs to the group II decarboxylase family. In terms of assembly, homohexamer. Interacts with calmodulin. Pyridoxal 5'-phosphate is required as a cofactor. Expressed at low levels in siliques.

It catalyses the reaction L-glutamate + H(+) = 4-aminobutanoate + CO2. Functionally, catalyzes the production of GABA. The calmodulin-binding is calcium-dependent and it is proposed that this may, directly or indirectly, form a calcium regulated control of GABA biosynthesis. This chain is Glutamate decarboxylase 3 (GAD3), found in Arabidopsis thaliana (Mouse-ear cress).